A 232-amino-acid polypeptide reads, in one-letter code: MLGESREEAERIVRAAREEAERIVRAAREEAERIESSSLAALSQASRNVLLSFQDSVTRSLRAIISMETAQAYDAGVLRELIPRVVSAWVQAEGDKLELILSPADLRTLEGVFCAALQEQLSAGVELRSDDCLTAGFRIVPAEGGSYYDFSAAAVAQLFSSYVSARVAEVLSLLRRSCDVFLLLPYNAATISSMRRGASFALSGFFGLCATFLGSAGCCGAWKYLVVSRAGA.

Belongs to the V-ATPase E subunit family.

In terms of biological role, produces ATP from ADP in the presence of a proton gradient across the membrane. The sequence is that of V-type ATP synthase subunit E (atpE) from Treponema pallidum (strain Nichols).